Reading from the N-terminus, the 102-residue chain is Small ribosomal subunit protein bS18 (102 aa).

This sequence belongs to the bacterial ribosomal protein bS18 family. In terms of assembly, part of the 30S ribosomal subunit. Forms a tight heterodimer with protein bS6.

Functionally, binds as a heterodimer with protein bS6 to the central domain of the 16S rRNA, where it helps stabilize the platform of the 30S subunit. The sequence is that of Small ribosomal subunit protein bS18 from Orientia tsutsugamushi (strain Boryong) (Rickettsia tsutsugamushi).